The sequence spans 119 residues: Putative arsenical resistance operon repressor ArsR2 (119 aa).

An HTH arsR-type domain is found at 24 to 119; the sequence is VDSDAMATDL…TLDDLRGNHE (96 aa). A DNA-binding region (H-T-H motif) is located at residues 60–83; that stretch reads VCDLEATVGVSQSAVSQALSRLYT.

Functionally, transcriptional repressor for the arsR2M operon. This is Putative arsenical resistance operon repressor ArsR2 (arsR2) from Halobacterium salinarum (strain ATCC 700922 / JCM 11081 / NRC-1) (Halobacterium halobium).